The chain runs to 248 residues: Large ribosomal subunit protein uL4 (248 aa).

Disordered regions lie at residues 48-95 and 210-248; these read GTHK…GPVP and AFSE…RTGA. Basic and acidic residues predominate over residues 233-248; that stretch reads DATKARSSRHDDRTGA.

The protein belongs to the universal ribosomal protein uL4 family. In terms of assembly, part of the 50S ribosomal subunit.

Functionally, one of the primary rRNA binding proteins, this protein initially binds near the 5'-end of the 23S rRNA. It is important during the early stages of 50S assembly. It makes multiple contacts with different domains of the 23S rRNA in the assembled 50S subunit and ribosome. In terms of biological role, forms part of the polypeptide exit tunnel. This chain is Large ribosomal subunit protein uL4, found in Tropheryma whipplei (strain TW08/27) (Whipple's bacillus).